The primary structure comprises 160 residues: Putative 4-hydroxy-4-methyl-2-oxoglutarate aldolase (160 aa).

Substrate contacts are provided by residues 75-78 (GDQL) and Arg97. Asp98 is an a divalent metal cation binding site.

This sequence belongs to the class II aldolase/RraA-like family. As to quaternary structure, homotrimer. The cofactor is a divalent metal cation.

It carries out the reaction 4-hydroxy-4-methyl-2-oxoglutarate = 2 pyruvate. It catalyses the reaction oxaloacetate + H(+) = pyruvate + CO2. Functionally, catalyzes the aldol cleavage of 4-hydroxy-4-methyl-2-oxoglutarate (HMG) into 2 molecules of pyruvate. Also contains a secondary oxaloacetate (OAA) decarboxylase activity due to the common pyruvate enolate transition state formed following C-C bond cleavage in the retro-aldol and decarboxylation reactions. This chain is Putative 4-hydroxy-4-methyl-2-oxoglutarate aldolase, found in Vibrio vulnificus (strain YJ016).